Consider the following 484-residue polypeptide: Acetyl-coenzyme A carboxylase carboxyl transferase subunit beta, chloroplastic (484 aa).

The 262-residue stretch at 223 to 484 folds into the CoA carboxyltransferase N-terminal domain; sequence LWIQCDNCYG…LHAFFPLNKN (262 aa). Cys227, Cys230, Cys243, and Cys246 together coordinate Zn(2+). The C4-type zinc-finger motif lies at 227-246; sequence CDNCYGLMYKKVKMNVCEQC.

Belongs to the AccD/PCCB family. In terms of assembly, acetyl-CoA carboxylase is a heterohexamer composed of biotin carboxyl carrier protein, biotin carboxylase and 2 subunits each of ACCase subunit alpha and ACCase plastid-coded subunit beta (accD). The cofactor is Zn(2+).

Its subcellular location is the plastid. It localises to the chloroplast stroma. It carries out the reaction N(6)-carboxybiotinyl-L-lysyl-[protein] + acetyl-CoA = N(6)-biotinyl-L-lysyl-[protein] + malonyl-CoA. It participates in lipid metabolism; malonyl-CoA biosynthesis; malonyl-CoA from acetyl-CoA: step 1/1. In terms of biological role, component of the acetyl coenzyme A carboxylase (ACC) complex. Biotin carboxylase (BC) catalyzes the carboxylation of biotin on its carrier protein (BCCP) and then the CO(2) group is transferred by the transcarboxylase to acetyl-CoA to form malonyl-CoA. This chain is Acetyl-coenzyme A carboxylase carboxyl transferase subunit beta, chloroplastic, found in Crucihimalaya wallichii (Rock-cress).